A 403-amino-acid polypeptide reads, in one-letter code: Aminomethyltransferase, mitochondrial (403 aa).

Residues 1–28 (MQRAMTVVPHLGLRLQALPLALGRPLSR) constitute a mitochondrion transit peptide. Substrate-binding residues include Glu232, Arg261, and Tyr399.

It belongs to the GcvT family. In terms of assembly, the glycine cleavage system is composed of four proteins: P, T, L and H.

The protein resides in the mitochondrion. It catalyses the reaction N(6)-[(R)-S(8)-aminomethyldihydrolipoyl]-L-lysyl-[protein] + (6S)-5,6,7,8-tetrahydrofolate = N(6)-[(R)-dihydrolipoyl]-L-lysyl-[protein] + (6R)-5,10-methylene-5,6,7,8-tetrahydrofolate + NH4(+). In terms of biological role, the glycine cleavage system catalyzes the degradation of glycine. This is Aminomethyltransferase, mitochondrial from Canis lupus familiaris (Dog).